Consider the following 274-residue polypeptide: Acetylaranotin bis-thiomethyltransferase (274 aa).

Belongs to the class I-like SAM-binding methyltransferase superfamily.

Its pathway is mycotoxin biosynthesis. Its function is as follows. Acetylaranotin bis-thiomethyltransferase involved in the biosynthesis of acetylaranotin derivatives, members of the epipolythiodioxopiperazine (ETP) class of toxins characterized by a disulfide-bridged cyclic dipeptide. The first step of acetylaranotin biosynthesis is performed by the NRPS ataP which produces diketopiperazine cyclo-L-Phe-L-Phe via the condensation of 2 phenylalanines (L-Phe). The ataC domain of ataTC then catalyzes the formation of bishydroxylation of cyclo-L-Phe-L-Phe. The glutathione S-transferase domain ataG in ataIMG further catalyzes the conjugation of two glutathiones to the bishydroxylated intermediate. Next, the dipeptidase ataJ removes the Glu residues. The following step is performed by the carbon sulfur lyase domain ataI of ataIMG which may convert the bis-cysteinyl adduct to yield an epidithiol intermediate. The ataT domain from ataTC then catalyzes the oxidation of the free dithiols, followed by a cyclization step catalyzed by the cytochrome P450 ataF. AtaF probably acts as an epoxidase to promote a dual epoxidation formation at C8 and C9 along with C8' and C9', followed by the spontaneous nucleophilic attack of the amide nitrogens N10 and N10' to yield an intermediate with the pyrrolidine partial structure. The final steps of acetylaranotin biosynthesis involve the acetylation and ring rearrangement of an epitetrathiodiketopiperazine intermediate to produce acetylaranotin. AtaH probably catalyzes the acetylation of epitetrathiodiketopiperazine to produce a diacetate and ataY is responsible for the formation of the dihydrooxepin moiety that converts the diacetate intermediate to acetylaranotin via acetylapoaranotin. Both enzymes could function independently in the absence of the other. The acetylaranotin bis-thiomethyltransferase ataS located outside of acetylaranotin gene cluster is the main thiomethyltransferase responsible for converting acetylaranotin and its related intermediates to their methylated forms. The polypeptide is Acetylaranotin bis-thiomethyltransferase (Aspergillus terreus (strain NIH 2624 / FGSC A1156)).